A 639-amino-acid polypeptide reads, in one-letter code: Chaperone protein DnaK (639 aa).

A Phosphothreonine; by autocatalysis modification is found at threonine 199. Low complexity predominate over residues 602–613 (AQAQQAAAGAEG). Residues 602 to 639 (AQAQQAAAGAEGQPEDASAKQDDDVVDAEFEEVKDDKK) are disordered. The span at 625–639 (DVVDAEFEEVKDDKK) shows a compositional bias: acidic residues.

Belongs to the heat shock protein 70 family.

Acts as a chaperone. This is Chaperone protein DnaK from Pseudoalteromonas atlantica (strain T6c / ATCC BAA-1087).